A 264-amino-acid polypeptide reads, in one-letter code: MSITLSTLLDLKKKSEKFAVMTAYDATFAYEMDQAGVEVILVGDSLGMVLQGHDSTIPVRLEDMVYHTASVRRGARNAFIIADMPFMSYGTPDQAMAGAKQLMQAGAHMVKLEGGAWLCDAIAHLSRQGVPICAHLGLTPQSVNKFGGYKVQGKEASQAQLMLDDAKALEQAGADILLLECVPTKLAKQLTEEACAPVVGIGAGPYTDGQVLVMHDLLGVGAGKKPKFVKNFLAGSDSIQAAFKGYVEAVKSGAFPAEEHSFNI.

Mg(2+)-binding residues include Asp-44 and Asp-83. Residues 44 to 45, Asp-83, and Lys-111 contribute to the 3-methyl-2-oxobutanoate site; that span reads DS. Glu-113 contacts Mg(2+). The Proton acceptor role is filled by Glu-180.

It belongs to the PanB family. As to quaternary structure, homodecamer; pentamer of dimers. Requires Mg(2+) as cofactor.

It localises to the cytoplasm. It catalyses the reaction 3-methyl-2-oxobutanoate + (6R)-5,10-methylene-5,6,7,8-tetrahydrofolate + H2O = 2-dehydropantoate + (6S)-5,6,7,8-tetrahydrofolate. The protein operates within cofactor biosynthesis; (R)-pantothenate biosynthesis; (R)-pantoate from 3-methyl-2-oxobutanoate: step 1/2. Its function is as follows. Catalyzes the reversible reaction in which hydroxymethyl group from 5,10-methylenetetrahydrofolate is transferred onto alpha-ketoisovalerate to form ketopantoate. In Hahella chejuensis (strain KCTC 2396), this protein is 3-methyl-2-oxobutanoate hydroxymethyltransferase 2.